An 839-amino-acid chain; its full sequence is Protein translocase subunit SecA (839 aa).

Residues Gln85, 103-107, and Asp493 each bind ATP; that span reads GEGKT. Over residues 780–790 the composition is skewed to basic and acidic residues; sequence QIHEQERERAS. The disordered stretch occupies residues 780 to 839; the sequence is QIHEQERERASQRATTAAPQNIQSQQSANTDDLPKVERNEACPCGSGKKFKNCHGRKSFS. Polar residues predominate over residues 791–809; that stretch reads QRATTAAPQNIQSQQSANT. Positions 821, 823, 832, and 833 each coordinate Zn(2+). A compositionally biased stretch (basic residues) spans 827–839; that stretch reads KKFKNCHGRKSFS.

The protein belongs to the SecA family. In terms of assembly, monomer and homodimer. Part of the essential Sec protein translocation apparatus which comprises SecA, SecYEG and auxiliary proteins SecDF. Other proteins may also be involved. It depends on Zn(2+) as a cofactor.

The protein localises to the cell membrane. It is found in the cytoplasm. The enzyme catalyses ATP + H2O + cellular proteinSide 1 = ADP + phosphate + cellular proteinSide 2.. In terms of biological role, part of the Sec protein translocase complex. Interacts with the SecYEG preprotein conducting channel. Has a central role in coupling the hydrolysis of ATP to the transfer of proteins into and across the cell membrane, serving as an ATP-driven molecular motor driving the stepwise translocation of polypeptide chains across the membrane. The sequence is that of Protein translocase subunit SecA from Streptococcus pyogenes serotype M6 (strain ATCC BAA-946 / MGAS10394).